An 89-amino-acid polypeptide reads, in one-letter code: uncharacterized protein (89 aa).

The segment at 31 to 89 is disordered; it reads TPQPLEPHEHPKPMEPNEFDPKPDDPPRNPDPSPFPNEVPKPKPSDFPIPDELYPQPIV. Basic and acidic residues predominate over residues 36–58; that stretch reads EPHEHPKPMEPNEFDPKPDDPPR. A compositionally biased stretch (pro residues) spans 59–69; that stretch reads NPDPSPFPNEV.

This is an uncharacterized protein from Dictyostelium discoideum (Social amoeba).